The following is a 304-amino-acid chain: Tegument protein VP22 (304 aa).

Disordered regions lie at residues 23-68 (YSTV…PNDD) and 112-184 (STSN…GTPK). Residues 43–58 (RENDLYDKQSVSKEND) show a composition bias toward basic and acidic residues. Residues 123–142 (AQPPPRGAAAAPPPRVPTRP) show a composition bias toward pro residues. Positions 143-154 (PTRAAATSTTPR) are enriched in low complexity. A Nuclear localization signal motif is present at residues 160 to 163 (PKQR). Positions 233-245 (LDRFLKAAAIRIL) match the Nuclear export signal motif. The interval 262 to 304 (STPDGYAAAGPNGYDRRPRTASRRRSLKCKPPADDFFDDTNSG) is disordered. Over residues 280–289 (RTASRRRSLK) the composition is skewed to basic residues.

This sequence belongs to the alphaherpesvirinae VP22 tegument protein family. As to quaternary structure, interacts with gE (via C-terminus); this interaction is necessary for the recruitment of VP22 to the Golgi and its packaging into virions. Interacts with gM (via C-terminus). Interacts with VP16; this interaction allows the formation of a tripartite complex composed of VP16, VP22 and UL41/VHS. Interacts with the capsid-binding protein UL16. Interacts with host CGAS. Post-translationally, highly phosphorylated in the host cell. Packaging is selective for underphosphorylated forms.

It localises to the virion tegument. It is found in the host cytoplasm. The protein resides in the host nucleus. The protein localises to the host Golgi apparatus. In terms of biological role, tegument protein that plays different roles during the time course of infection. Participates in both the accumulation of viral mRNAs and viral protein translation at late time of infection. Modulates the RNase activity of the virion host shutoff protein UL41 probably to ensure necessary levels of key cellular mRNAs and proteins. Plays a role in microtubule reorganization that occurs after viral infection by stabilizing microtubule network. Plays a role in the inhibition of host innate immune system by targeting the CGAS enzymatic activity which is the principal cytosolic DNA sensor that detects invading viral DNA. Acts by mediating disruption of liquid-like droplets in which CGAS is activated, thereby preventing CGAS activity. The protein is Tegument protein VP22 of Equine herpesvirus 1 (strain Ab4p) (EHV-1).